The chain runs to 803 residues: Volume-regulated anion channel subunit LRRC8B (803 aa).

Residues 1–25 (MITLTELKCLADAQSSYHILKPWWD) lie on the Cytoplasmic side of the membrane. Residues 26–46 (VFWYYITLIMLLVAVLAGALQ) form a helical membrane-spanning segment. Over 47-119 (LTQSRVLCCL…YEKQLHWFAK (73 aa)) the chain is Extracellular. 2 disulfide bridges follow: Cys-55-Cys-304 and Cys-109-Cys-289. Asn-78 is a glycosylation site (N-linked (GlcNAc...) asparagine). The helical transmembrane segment at 120 to 140 (FFPYLVLLHTLIFAACSNFWL) threads the bilayer. The Cytoplasmic portion of the chain corresponds to 141-261 (HYPSTSSRLE…DIIYRVYLKQ (121 aa)). A phosphoserine mark is found at Ser-186 and Ser-196. Residues 262 to 282 (IIVKVILFVLIITYVPYFLTH) traverse the membrane as a helical segment. Residues 283 to 307 (ITLEIDCSVDVQAFTGYKRYQCVYS) are Extracellular-facing. Residues 308–328 (LAEIFKVLASFYVILVILYGL) form a helical membrane-spanning segment. The Cytoplasmic segment spans residues 329-803 (TSSYSLWWML…ERLQTCLDKC (475 aa)). LRR repeat units lie at residues 464-486 (NLKE…AFLE), 488-509 (NLKI…VFHL), 511-532 (NLKE…MQLE), 539-559 (NLRT…VTDL), 562-582 (SLQK…NNLK), 586-607 (NLKS…IFSL), 609-630 (NLHE…ISFQ), 634-655 (NLSC…IGAL), 657-678 (NLEQ…LFLC), 680-701 (KLHY…IQYL), 703-724 (NLQY…LFQC), 726-747 (KLQC…VGEL), and 749-771 (NLTH…EGCQ).

Belongs to the LRRC8 family. As to quaternary structure, heterohexamer; oligomerizes with other LRRC8 proteins (LRRC8A, LRRC8C, LRRC8D and/or LRRC8E) to form a heterohexamer. In vivo, the subunit composition may depend primarily on expression levels, and heterooligomeric channels containing various proportions of the different LRRC8 proteins may coexist.

It localises to the cell membrane. The protein localises to the endoplasmic reticulum membrane. The enzyme catalyses chloride(in) = chloride(out). The catalysed reaction is iodide(out) = iodide(in). It catalyses the reaction taurine(out) = taurine(in). Non-essential component of the volume-regulated anion channel (VRAC, also named VSOAC channel), an anion channel required to maintain a constant cell volume in response to extracellular or intracellular osmotic changes. The VRAC channel conducts iodide better than chloride and can also conduct organic osmolytes like taurine. Channel activity requires LRRC8A plus at least one other family member (LRRC8B, LRRC8C, LRRC8D or LRRC8E); channel characteristics depend on the precise subunit composition. In Homo sapiens (Human), this protein is Volume-regulated anion channel subunit LRRC8B.